Consider the following 242-residue polypeptide: Aspartate/glutamate leucyltransferase (242 aa).

It belongs to the R-transferase family. Bpt subfamily.

The protein localises to the cytoplasm. It catalyses the reaction N-terminal L-glutamyl-[protein] + L-leucyl-tRNA(Leu) = N-terminal L-leucyl-L-glutamyl-[protein] + tRNA(Leu) + H(+). It carries out the reaction N-terminal L-aspartyl-[protein] + L-leucyl-tRNA(Leu) = N-terminal L-leucyl-L-aspartyl-[protein] + tRNA(Leu) + H(+). Functionally, functions in the N-end rule pathway of protein degradation where it conjugates Leu from its aminoacyl-tRNA to the N-termini of proteins containing an N-terminal aspartate or glutamate. This Alcanivorax borkumensis (strain ATCC 700651 / DSM 11573 / NCIMB 13689 / SK2) protein is Aspartate/glutamate leucyltransferase.